The chain runs to 286 residues: Bifunctional protein FolD (286 aa).

Residues 165–167 and Ser190 contribute to the NADP(+) site; that span reads GRS.

The protein belongs to the tetrahydrofolate dehydrogenase/cyclohydrolase family. Homodimer.

The enzyme catalyses (6R)-5,10-methylene-5,6,7,8-tetrahydrofolate + NADP(+) = (6R)-5,10-methenyltetrahydrofolate + NADPH. It carries out the reaction (6R)-5,10-methenyltetrahydrofolate + H2O = (6R)-10-formyltetrahydrofolate + H(+). It functions in the pathway one-carbon metabolism; tetrahydrofolate interconversion. Catalyzes the oxidation of 5,10-methylenetetrahydrofolate to 5,10-methenyltetrahydrofolate and then the hydrolysis of 5,10-methenyltetrahydrofolate to 10-formyltetrahydrofolate. In Burkholderia cenocepacia (strain ATCC BAA-245 / DSM 16553 / LMG 16656 / NCTC 13227 / J2315 / CF5610) (Burkholderia cepacia (strain J2315)), this protein is Bifunctional protein FolD.